A 90-amino-acid chain; its full sequence is Essential MCU regulator, mitochondrial (90 aa).

A helical transmembrane segment spans residues 49-68 (GVLKLIFVSASSLYIGGLIA).

The protein belongs to the SMDT1/EMRE family.

It localises to the mitochondrion inner membrane. In terms of biological role, essential regulatory subunit of the mitochondrial calcium uniporter (mcu-1) channel, a protein that mediates calcium uptake into mitochondria. This Caenorhabditis elegans protein is Essential MCU regulator, mitochondrial.